The primary structure comprises 68 residues: DNA-directed RNA polymerase subunit Rpo10 (68 aa).

Cys-7, Cys-10, Cys-44, and Cys-45 together coordinate Zn(2+).

The protein belongs to the archaeal Rpo10/eukaryotic RPB10 RNA polymerase subunit family. As to quaternary structure, part of the RNA polymerase complex. The cofactor is Zn(2+).

It localises to the cytoplasm. It carries out the reaction RNA(n) + a ribonucleoside 5'-triphosphate = RNA(n+1) + diphosphate. Functionally, DNA-dependent RNA polymerase (RNAP) catalyzes the transcription of DNA into RNA using the four ribonucleoside triphosphates as substrates. The polypeptide is DNA-directed RNA polymerase subunit Rpo10 (Methanococcus maripaludis (strain C7 / ATCC BAA-1331)).